We begin with the raw amino-acid sequence, 218 residues long: N-(5'-phosphoribosyl)anthranilate isomerase (218 aa).

The protein belongs to the TrpF family.

The enzyme catalyses N-(5-phospho-beta-D-ribosyl)anthranilate = 1-(2-carboxyphenylamino)-1-deoxy-D-ribulose 5-phosphate. It participates in amino-acid biosynthesis; L-tryptophan biosynthesis; L-tryptophan from chorismate: step 3/5. The sequence is that of N-(5'-phosphoribosyl)anthranilate isomerase from Rhodopseudomonas palustris (strain BisA53).